Reading from the N-terminus, the 154-residue chain is Myoglobin (154 aa).

The Globin domain maps to 2-148 (GLSDDEWNHV…FRNDMASKYK (147 aa)). Residue H65 participates in nitrite binding. H65 is a binding site for O2. Heme b is bound at residue H94.

This sequence belongs to the globin family. As to quaternary structure, monomeric.

The protein resides in the cytoplasm. It is found in the sarcoplasm. The enzyme catalyses Fe(III)-heme b-[protein] + nitric oxide + H2O = Fe(II)-heme b-[protein] + nitrite + 2 H(+). The catalysed reaction is H2O2 + AH2 = A + 2 H2O. Functionally, monomeric heme protein which primary function is to store oxygen and facilitate its diffusion within muscle tissues. Reversibly binds oxygen through a pentacoordinated heme iron and enables its timely and efficient release as needed during periods of heightened demand. Depending on the oxidative conditions of tissues and cells, and in addition to its ability to bind oxygen, it also has a nitrite reductase activity whereby it regulates the production of bioactive nitric oxide. Under stress conditions, like hypoxia and anoxia, it also protects cells against reactive oxygen species thanks to its pseudoperoxidase activity. The chain is Myoglobin (MB) from Caretta caretta (Loggerhead sea turtle).